The primary structure comprises 433 residues: UPF0597 protein Spea_0809 (433 aa).

The protein belongs to the UPF0597 family.

The polypeptide is UPF0597 protein Spea_0809 (Shewanella pealeana (strain ATCC 700345 / ANG-SQ1)).